The primary structure comprises 60 residues: Cytotoxin 7 (60 aa).

Disulfide bonds link cysteine 3–cysteine 21, cysteine 14–cysteine 38, cysteine 42–cysteine 53, and cysteine 54–cysteine 59.

This sequence belongs to the three-finger toxin family. Short-chain subfamily. Type IA cytotoxin sub-subfamily. As to quaternary structure, monomer in solution; Homodimer and oligomer in the presence of negatively charged lipids forming a pore with a size ranging between 20 and 30 Angstroms. In terms of tissue distribution, expressed by the venom gland.

Its subcellular location is the secreted. It localises to the target cell membrane. Functionally, shows cytolytic activity on many different cells by forming pore in lipid membranes. In vivo, increases heart rate or kills the animal by cardiac arrest. In addition, it binds to heparin with high affinity, interacts with Kv channel-interacting protein 1 (KCNIP1) in a calcium-independent manner, and binds to integrin alpha-V/beta-3 (ITGAV/ITGB3) with moderate affinity. This is Cytotoxin 7 from Naja annulifera (Banded Egyptian cobra).